The chain runs to 329 residues: DNA polymerase III subunit delta' (329 aa).

As to quaternary structure, component of the DNA clamp loading complex consisting of tau(3):delta(1):delta'(1). The DNA polymerase III holoenzyme complex contains at least 10 different subunits organized into 3 functionally essential subassemblies: the Pol III core, the beta sliding clamp processivity factor and the clamp-loading complex. The Pol III core (subunits alpha, epsilon and theta) contains the polymerase and the 3'-5' exonuclease proofreading activities. The polymerase is tethered to the template via the dimeric beta sliding clamp processivity factor. The DNA clamp-loading complex assembles the beta sliding clamp onto the primed template and plays a central role in the organization and communication at the replication fork.

It localises to the cytoplasm. The protein localises to the nucleoid. The catalysed reaction is DNA(n) + a 2'-deoxyribonucleoside 5'-triphosphate = DNA(n+1) + diphosphate. In terms of biological role, DNA polymerase III is a complex, multichain enzyme responsible for most of the replicative synthesis in bacteria. The chain is DNA polymerase III subunit delta' (holB) from Bacillus subtilis (strain 168).